Here is a 137-residue protein sequence, read N- to C-terminus: Large-conductance mechanosensitive channel (137 aa).

Helical transmembrane passes span V15 to V35 and G81 to I101.

The protein belongs to the MscL family. As to quaternary structure, homopentamer.

Its subcellular location is the cell inner membrane. Functionally, channel that opens in response to stretch forces in the membrane lipid bilayer. May participate in the regulation of osmotic pressure changes within the cell. This is Large-conductance mechanosensitive channel from Hyphomonas neptunium (strain ATCC 15444).